A 423-amino-acid polypeptide reads, in one-letter code: Histidine--tRNA ligase (423 aa).

Belongs to the class-II aminoacyl-tRNA synthetase family. In terms of assembly, homodimer.

It localises to the cytoplasm. The catalysed reaction is tRNA(His) + L-histidine + ATP = L-histidyl-tRNA(His) + AMP + diphosphate + H(+). The polypeptide is Histidine--tRNA ligase (Corynebacterium diphtheriae (strain ATCC 700971 / NCTC 13129 / Biotype gravis)).